The primary structure comprises 2271 residues: Serine-rich adhesin for platelets (2271 aa).

A signal peptide spans 1-89 (MSKRQKAFHD…VNMLHDQQAF (89 aa)). A serine-rich repeat region 1, SRR1 region spans residues 90–230 (AASDAPLTSE…KTSTTSTSTA (141 aa)). The segment covering 100 to 111 (LNTQSETVGNQN) has biased composition (polar residues). A disordered region spans residues 100 to 229 (LNTQSETVGN…NKTSTTSTST (130 aa)). A compositionally biased stretch (low complexity) spans 112 to 128 (STTIEASTSTADSTSVT). Over residues 129–140 (KNSSSVQTSNSD) the composition is skewed to polar residues. A compositionally biased stretch (low complexity) spans 150–229 (VTSTTNSTSN…NKTSTTSTST (80 aa)). Residues 231–751 (PVKLRTFSRL…TTFKYEVTRN (521 aa)) are non-repeat region (NRR). Positions 245–491 (FASAATTTAV…QQVQFGTFEY (247 aa)) are L-lectin module. Ca(2+)-binding residues include Asp-365, Tyr-367, Asn-369, and Asp-382. The interval 492 to 571 (TESAVTQVRY…NAGQSVTYYF (80 aa)) is beta-grasp module. Residues 572–659 (TDVKAPTVTV…KSTTTFTINV (88 aa)) are cadherin-like module-1. 10 residues coordinate Ca(2+): Asp-573, Lys-575, Asp-601, Asn-602, Asp-645, Asp-661, Thr-663, Asp-690, Asn-691, and Asp-734. The interval 660-751 (VDTTAPTVTP…TTFKYEVTRN (92 aa)) is cadherin-like module-2. 2 disordered regions span residues 751 to 791 (NSMS…VVST) and 806 to 2242 (SVSA…NGLL). 3 stretches are compositionally biased toward low complexity: residues 752–791 (SMSD…VVST), 806–1392 (SVSA…LSLS), and 1402–2214 (SNSA…ATSE). A serine-rich repeat region 2, SRR2 region spans residues 752-2232 (SMSDSVSTSG…AQSEKRLPDT (1481 aa)). The short motif at 2229–2233 (LPDTG) is the LPXTG sorting signal element. Thr-2232 carries the post-translational modification Pentaglycyl murein peptidoglycan amidated threonine. Residues 2233-2271 (GDSIKQNGLLGGVMTLLVGLGLMKRKKKKDENDQDDSQA) constitute a propeptide, removed by sortase.

The protein belongs to the serine-rich repeat protein (SRRP) family. Post-translationally, proteolytically cleaved by a metalloprotease. Glycosylated. It is probable that most of the Ser residues in SSR1 and SSR2 are O-GlcNAcylated. Sequential glycosylation by sugar transferases are able to generate complex sugar polymorphisms.

It localises to the secreted. Its subcellular location is the cell wall. Functionally, mediates binding to human platelets, possibly through a receptor-ligand interaction. Probably associated with virulence in endovascular infection. Plays a positive role in biofilm formation, possibly by self-association via the non-repeat region (NRR or binding region, BR). Binds to and plays a role in human lung epithelial cell invasion via the L-lectin module of its NRR domain; N-acetylneuraminic acid (Neu5Ac) inhibits binding. Treatment of host cells with neuraminidase decreases adherence of S.aureus cells, suggesting SraP recognizes a host terminal Neu5Ac moiety as a receptor. The sequence is that of Serine-rich adhesin for platelets from Staphylococcus aureus (strain NCTC 8325 / PS 47).